A 522-amino-acid polypeptide reads, in one-letter code: Neutral amino acid uniporter 4 (522 aa).

10 helical membrane passes run 115 to 135 (AGVLLGPISLLFFGIISIHCM), 181 to 201 (LVDWFLVVTQLGFCSVYFVFL), 226 to 246 (SLDLRIYMFSFLPLIIPLVFI), 255 to 275 (LSFFANVSMAISLLIVYQYVI), 293 to 313 (YPLFFGTAIFAFEGIGVVLPL), 329 to 349 (IGMAIVTTLYISLATLGYFCF), 377 to 397 (FGIYVTYAIQYYVPAEIILPA), 409 to 429 (LCEFTMRFFLVCLTCAVAVLI), 435 to 455 (VISFVGAVSSSTLALILPPLV), and 467 to 487 (PWVIMKDVGIAVIGFVGFIAG). N-linked (GlcNAc...) asparagine glycosylation occurs at Asn515.

The protein belongs to the amino acid/polyamine transporter 2 family.

It is found in the lysosome membrane. The enzyme catalyses L-tryptophan(in) = L-tryptophan(out). It catalyses the reaction L-alanine(in) = L-alanine(out). It carries out the reaction L-proline(in) = L-proline(out). Uniporter that mediates the transport of neutral amino acids like L-tryptophan, proline and alanine. The transport activity is sodium ions-independent, electroneutral and therefore functions via facilitated diffusion. The protein is Neutral amino acid uniporter 4 of Xenopus laevis (African clawed frog).